Reading from the N-terminus, the 317-residue chain is tRNA dimethylallyltransferase (317 aa).

Residue 14 to 21 (GPTAVGKT) participates in ATP binding. Residue 16–21 (TAVGKT) coordinates substrate. An interaction with substrate tRNA region spans residues 39–42 (DSMQ).

It belongs to the IPP transferase family. In terms of assembly, monomer. It depends on Mg(2+) as a cofactor.

It catalyses the reaction adenosine(37) in tRNA + dimethylallyl diphosphate = N(6)-dimethylallyladenosine(37) in tRNA + diphosphate. Functionally, catalyzes the transfer of a dimethylallyl group onto the adenine at position 37 in tRNAs that read codons beginning with uridine, leading to the formation of N6-(dimethylallyl)adenosine (i(6)A). The protein is tRNA dimethylallyltransferase of Bacillus cereus (strain B4264).